The following is a 375-amino-acid chain: Probable aspartate aminotransferase (375 aa).

L-aspartate contacts are provided by Gly31 and Asn165. Lys223 carries the post-translational modification N6-(pyridoxal phosphate)lysine. An L-aspartate-binding site is contributed by Arg353.

It belongs to the class-I pyridoxal-phosphate-dependent aminotransferase family. As to quaternary structure, homodimer. It depends on pyridoxal 5'-phosphate as a cofactor.

It localises to the cytoplasm. The enzyme catalyses L-aspartate + 2-oxoglutarate = oxaloacetate + L-glutamate. The protein is Probable aspartate aminotransferase of Methanocaldococcus jannaschii (strain ATCC 43067 / DSM 2661 / JAL-1 / JCM 10045 / NBRC 100440) (Methanococcus jannaschii).